A 354-amino-acid chain; its full sequence is Membrane progestin receptor beta (354 aa).

At Met1–Glu75 the chain is on the cytoplasmic side. Residues Val76–Phe96 form a helical membrane-spanning segment. Residues Ala97–Pro111 lie on the Extracellular side of the membrane. Residues Leu112–Leu132 form a helical membrane-spanning segment. The Cytoplasmic segment spans residues Gln133–Arg174. The helical transmembrane segment at Phe175–Cys195 threads the bilayer. Over Tyr196–Gln213 the chain is Extracellular. A helical transmembrane segment spans residues Val214–Leu234. The Cytoplasmic portion of the chain corresponds to Cys235–Gln243. A helical membrane pass occupies residues Ala244–Cys264. Topologically, residues Pro265–Gln283 are extracellular. The helical transmembrane segment at Ile284–Tyr304 threads the bilayer. Topologically, residues Gln305 to Ser319 are cytoplasmic. The helical transmembrane segment at Val320–Leu340 threads the bilayer. Residues Leu341 to Ser354 are Extracellular-facing.

It belongs to the ADIPOR family. In terms of tissue distribution, highly expressed in the hypothalamus. Also expressed in spinal cord, kidney and testis.

It is found in the cell membrane. Functionally, plasma membrane progesterone (P4) receptor coupled to G proteins. Seems to act through a G(i) mediated pathway. May be involved in oocyte maturation. Also binds dehydroepiandrosterone (DHEA), pregnanolone, pregnenolone and allopregnanolone. This chain is Membrane progestin receptor beta, found in Homo sapiens (Human).